We begin with the raw amino-acid sequence, 206 residues long: Uridine kinase (206 aa).

11 to 18 (GGTGSGKS) is an ATP binding site.

Belongs to the uridine kinase family.

It is found in the cytoplasm. It catalyses the reaction uridine + ATP = UMP + ADP + H(+). It carries out the reaction cytidine + ATP = CMP + ADP + H(+). It participates in pyrimidine metabolism; CTP biosynthesis via salvage pathway; CTP from cytidine: step 1/3. The protein operates within pyrimidine metabolism; UMP biosynthesis via salvage pathway; UMP from uridine: step 1/1. The chain is Uridine kinase from Clostridium botulinum (strain Langeland / NCTC 10281 / Type F).